A 243-amino-acid polypeptide reads, in one-letter code: uncharacterized protein (243 aa).

This is an uncharacterized protein from Ureaplasma parvum serovar 3 (strain ATCC 700970).